Reading from the N-terminus, the 355-residue chain is NADH dehydrogenase [ubiquinone] 1 alpha subcomplex subunit 10, mitochondrial (355 aa).

A mitochondrion-targeting transit peptide spans 1–35 (MALRLLRLVPASAPARGLAAGAQRVGRIHTSVHCK). K122 carries the N6-acetyllysine; alternate modification. Residue K122 is modified to N6-succinyllysine; alternate. Residue S250 is modified to Phosphoserine; by PINK1. K285 is modified (N6-succinyllysine).

The protein belongs to the complex I NDUFA10 subunit family. Complex I is composed of 45 different subunits. This a component of the hydrophobic protein fraction. FAD serves as cofactor. Post-translationally, phosphorylation at Ser-250 by PINK1 is required for the binding and/or reduction of the complex I substrate ubiquinone. Acetylation of Lys-242 is observed in liver mitochondria from fasted mice but not from fed mice.

The protein localises to the mitochondrion matrix. Accessory subunit of the mitochondrial membrane respiratory chain NADH dehydrogenase (Complex I), that is believed not to be involved in catalysis. Complex I functions in the transfer of electrons from NADH to the respiratory chain. The immediate electron acceptor for the enzyme is believed to be ubiquinone. The protein is NADH dehydrogenase [ubiquinone] 1 alpha subcomplex subunit 10, mitochondrial (Ndufa10) of Mus musculus (Mouse).